Consider the following 77-residue polypeptide: MAREEPCPNCGKMAEIVSEGDREILRCAACGTERVIVGMEEILPIEKKLVIASLILAIILLGILYYISYQMIAHLYT.

A helical transmembrane segment spans residues 49 to 71; sequence LVIASLILAIILLGILYYISYQM.

It localises to the membrane. This is an uncharacterized protein from Archaeoglobus fulgidus (strain ATCC 49558 / DSM 4304 / JCM 9628 / NBRC 100126 / VC-16).